A 522-amino-acid chain; its full sequence is Light-independent protochlorophyllide reductase subunit B (522 aa).

A [4Fe-4S] cluster-binding site is contributed by Asp-36. Asp-274 (proton donor) is an active-site residue. A substrate-binding site is contributed by 409–410 (GL). A disordered region spans residues 426–464 (DEAGPSHHGGKAVPASAPRAEATADEGSTPEEAVPPVAA). A compositionally biased stretch (low complexity) spans 455–464 (PEEAVPPVAA).

This sequence belongs to the ChlB/BchB/BchZ family. In terms of assembly, protochlorophyllide reductase is composed of three subunits; BchL, BchN and BchB. Forms a heterotetramer of two BchB and two BchN subunits. Requires [4Fe-4S] cluster as cofactor.

The catalysed reaction is chlorophyllide a + oxidized 2[4Fe-4S]-[ferredoxin] + 2 ADP + 2 phosphate = protochlorophyllide a + reduced 2[4Fe-4S]-[ferredoxin] + 2 ATP + 2 H2O. Its pathway is porphyrin-containing compound metabolism; bacteriochlorophyll biosynthesis (light-independent). In terms of biological role, component of the dark-operative protochlorophyllide reductase (DPOR) that uses Mg-ATP and reduced ferredoxin to reduce ring D of protochlorophyllide (Pchlide) to form chlorophyllide a (Chlide). This reaction is light-independent. The NB-protein (BchN-BchB) is the catalytic component of the complex. In Cereibacter sphaeroides (strain ATCC 17025 / ATH 2.4.3) (Rhodobacter sphaeroides), this protein is Light-independent protochlorophyllide reductase subunit B.